The following is a 949-amino-acid chain: MSDMVDLKKFVTELGKTQKELKNVIEQAKDIGLELKTNFKMTPEQAGKLYKYIVDGIKEQIQANQPTKNPKQDNKDDLNTAATPKPLAKKASKTPKKEETKAQPKPKKTKEKKKEAPAPIIKKKEIEIVNTFENQTPLVENTPKAVSHSQIEKAKQKLQEIQKSREALNKLTQSNTNTTNNANSASNVSNAKKEISEVKKQEQEIKRHENIKRRTGFRVIKRNDETENETENSVTESKKPTQSAAAIFEDIKKEWQEKDKQETKKTKKPSKPKATPTAKNNKSHKIDFSDVRDFKGNDIYDDETDEILLFDLHEQDNLNKEEEEKEARQNINDRVRVQRKNPWMNEAGIKRQSKKKRVFRNDNSQKVIQSAIAIPEEVRVYEFAQKANLNLADVIKTLFNLGLMVTKNDFLDKDSIEILAEEFHLEISVQNTLEEFEVEEVLEGVKKERPPVVTIMGHVDHGKTSLLDKIRDKRVAHTEAGGITQHIGAYMVEKNNKWVSFIDTPGHEAFSQMRNRGAQVTDIAVIVIAADDGVKQQTIEALEHAKAANVPVIFAMNKMDKPNVNPDKLKAECAELGYNPVDWGGEHEFIPVSAKTGDGIDNLLETILIQADIMELKAIEEGSARAVVLEGSVEKGRGAVATVIVQSGTLSVGDSFFAETAFGKVRTMTDDQGKSIQNLKPSMVALITGLSEVPPAGSVLIGVENDSIARLQAQKRATYLRQKALSKSTKVSFDELSEMVANKELKNIPVIIKADTQGSLEAIKNSLLELNNEEVAIQVIHSGVGGITENDLSLVSSSEHAVILGFNIRPTGNVKNKAKEYNVSIKTYTVIYALIEGMRSLLLGLMSPIIEEEHTGQAEVRETFNIPKVGTIAGCVVSDGEIARGIKARLIRDGVVVHTGEILSLKRFKDDVKEVSKGYECGIMLDNYNEIKVGDVFETYKEIHKKRTL.

Disordered regions lie at residues 61–122, 139–159, and 171–284; these read IQAN…PIIK, VENTPKAVSHSQIEKAKQKLQ, and LTQS…NKSH. 2 stretches are compositionally biased toward basic and acidic residues: residues 112 to 122 and 150 to 159; these read KKKEAPAPIIK and QIEKAKQKLQ. The segment covering 174-190 has biased composition (low complexity); that stretch reads SNTNTTNNANSASNVSN. Basic and acidic residues predominate over residues 191-208; sequence AKKEISEVKKQEQEIKRH. A compositionally biased stretch (basic residues) spans 209–220; that stretch reads ENIKRRTGFRVI. Over residues 249–264 the composition is skewed to basic and acidic residues; it reads EDIKKEWQEKDKQETK. In terms of domain architecture, tr-type G spans 448–617; the sequence is ERPPVVTIMG…LIQADIMELK (170 aa). The tract at residues 457–464 is G1; that stretch reads GHVDHGKT. 457–464 is a GTP binding site; the sequence is GHVDHGKT. A G2 region spans residues 482–486; sequence GITQH. Residues 503–506 form a G3 region; it reads DTPG. GTP-binding positions include 503-507 and 557-560; these read DTPGH and NKMD. The G4 stretch occupies residues 557-560; it reads NKMD. The segment at 593 to 595 is G5; sequence SAK.

Belongs to the TRAFAC class translation factor GTPase superfamily. Classic translation factor GTPase family. IF-2 subfamily.

It localises to the cytoplasm. In terms of biological role, one of the essential components for the initiation of protein synthesis. Protects formylmethionyl-tRNA from spontaneous hydrolysis and promotes its binding to the 30S ribosomal subunits. Also involved in the hydrolysis of GTP during the formation of the 70S ribosomal complex. This is Translation initiation factor IF-2 (infB) from Helicobacter pylori (strain J99 / ATCC 700824) (Campylobacter pylori J99).